A 493-amino-acid chain; its full sequence is Dipeptide permease D (493 aa).

13 helical membrane passes run 14–34 (VVAL…LLIL), 49–69 (ALFS…GYLA), 91–111 (LVLG…AIIV), 138–158 (GGFS…PIAC), 167–187 (WAMG…IFLC), 212–232 (NWGW…VLFW), 235–255 (WAVY…GKIY), 267–287 (LGLI…AQQG), 312–332 (MFQS…AWLI), 344–364 (IWGK…ILTL), 379–399 (LMIA…PVAM), 413–433 (VLTG…AGVI), and 458–478 (VFSE…LIWL).

It belongs to the major facilitator superfamily. Proton-dependent oligopeptide transporter (POT/PTR) (TC 2.A.17) family. DtpD subfamily.

It is found in the cell inner membrane. In terms of biological role, probable proton-dependent permease that transports dipeptides. This chain is Dipeptide permease D, found in Citrobacter rodentium (strain ICC168) (Citrobacter freundii biotype 4280).